A 189-amino-acid chain; its full sequence is MNTLTIFGIAVALAMDAFAVSIAAGVFLRSIGLRHYFRLAWHFGLFQALMPIVGWYAGLSVRGLIERYDHWIAFFLLAFVSFNMIRESFDAGENHTKADPTRGLRLVLLSIATSIDALAVGLSLSVLNVSVWMPATVIGITAAVFTVGGLMMGSRAGDIPWLRRYADRVGAGVLLFIGLRILYAHGVFY.

6 helical membrane-spanning segments follow: residues 6 to 26, 39 to 59, 71 to 91, 106 to 126, 131 to 151, and 169 to 189; these read IFGIAVALAMDAFAVSIAAGV, LAWHFGLFQALMPIVGWYAGL, WIAFFLLAFVSFNMIRESFDA, LVLLSIATSIDALAVGLSLSV, VWMPATVIGITAAVFTVGGLM, and VGAGVLLFIGLRILYAHGVFY.

Belongs to the MntP (TC 9.B.29) family.

The protein resides in the cell inner membrane. Probably functions as a manganese efflux pump. The sequence is that of Putative manganese efflux pump MntP from Desulfosudis oleivorans (strain DSM 6200 / JCM 39069 / Hxd3) (Desulfococcus oleovorans).